The chain runs to 393 residues: Cyclin CCL1 (393 aa).

Residues 1–19 (MTDIQLNGKSTLDTPSATM) show a composition bias toward polar residues. Disordered regions lie at residues 1–45 (MTDI…RISD) and 289–325 (SREG…SEEY). 2 stretches are compositionally biased toward basic and acidic residues: residues 21-35 (AKEK…DENN) and 300-321 (NEKE…KSTE).

This sequence belongs to the cyclin family. Cyclin C subfamily. In terms of assembly, CCL1 and KIN28 form the TFIIK complex, a component of TFIIH holo complex. Component of a complex consisting of KIN28, CCL1 and TFB3.

Functionally, regulatory component of the TFIIK complex (KIN28-CCL1 dimer) which is the protein kinase component of transcription factor IIH (TFIIH) and phosphorylates the C-terminal domain of RNA polymerase II during transition from transcription to elongation after preinitiation complex (PIC) formation, thereby positively regulating transcription. TFIIH (or factor B) is essential for both basal and activated transcription, and is involved in nucleotide excision repair (NER) of damaged DNA. TFIIH has DNA-dependent ATPase activity and is essential for polymerase II transcription in vitro. The sequence is that of Cyclin CCL1 (CCL1) from Saccharomyces cerevisiae (strain ATCC 204508 / S288c) (Baker's yeast).